The chain runs to 750 residues: MNRVDTRPPERRTQTISDGELGALVEGRHRDPFAILGPHRDGDTLIVRACVPGAHSVMLADSRGEPLAPMTPLHAGGVFTGRLPAGVSVYQLLVRWHNGTQQVSHDPYAFGLLLGELDLHLIAEGRHFELGACLGAQWRNVDGVQGVRFAVWAPNARRVSVIGDFNGWQPARHPMRLRHPSGVWELFIPEAMGARPGCRYKFDLLDPHDAQLPDKADPLALATEAPPATASVVTQPQVSAPPFAWQDDEWMRLRNAVDPYAAPLSIYEVHVGSWLRAANDPARGWEVLADRLIPYVHELGFTHIELLPVTEHPFGGSWGYQPLSLYAPTARLGPPQAFAAFIDRCHRDGIGVILDWVPAHFPTDPHGLARFDGTALYEHEDPREGFHQDWNTLIYNLGRNEVRGFLLAGALHWLEHFHVDGLRVDAVASMLYRDYSRAPDQWVPNRFGGRENLEAVAFLRELNTVVHERCPGALTIAEESTAWPGVTASAASGGLGFDFKWNMGWMHDTLRYLSLDPIHRAWHHQDMTFGTVYAWSEAFVLPLSHDEVVHGKGSMLRKCPGDDWQRFAGLRAYYGFMWAHPGKKLLFMGGELAQWQEWNHDAELDWALLDHPMHRGVHTLVRDLNALYRELPALHELDHSPAGFQWVVGDDHQNSVFAWLRRPAPGSGDVVLAVTNMTPVPRYGYRIGVPSEGCWHERLNTDAACYGGSNLGNGGAVTAEPVPSHGQEASVLLTLPPLATVILQHAGTQA.

Asp425 (nucleophile) is an active-site residue. Glu478 serves as the catalytic Proton donor.

It belongs to the glycosyl hydrolase 13 family. GlgB subfamily. As to quaternary structure, monomer.

It catalyses the reaction Transfers a segment of a (1-&gt;4)-alpha-D-glucan chain to a primary hydroxy group in a similar glucan chain.. It functions in the pathway glycan biosynthesis; glycogen biosynthesis. Catalyzes the formation of the alpha-1,6-glucosidic linkages in glycogen by scission of a 1,4-alpha-linked oligosaccharide from growing alpha-1,4-glucan chains and the subsequent attachment of the oligosaccharide to the alpha-1,6 position. The protein is 1,4-alpha-glucan branching enzyme GlgB of Cupriavidus pinatubonensis (strain JMP 134 / LMG 1197) (Cupriavidus necator (strain JMP 134)).